The chain runs to 428 residues: Ribosomal RNA small subunit methyltransferase B (428 aa).

S-adenosyl-L-methionine contacts are provided by residues 253 to 259 (CAAPGGK), D276, D302, and D321. Catalysis depends on C374, which acts as the Nucleophile.

Belongs to the class I-like SAM-binding methyltransferase superfamily. RsmB/NOP family.

It is found in the cytoplasm. The catalysed reaction is cytidine(967) in 16S rRNA + S-adenosyl-L-methionine = 5-methylcytidine(967) in 16S rRNA + S-adenosyl-L-homocysteine + H(+). Specifically methylates the cytosine at position 967 (m5C967) of 16S rRNA. The sequence is that of Ribosomal RNA small subunit methyltransferase B from Citrobacter koseri (strain ATCC BAA-895 / CDC 4225-83 / SGSC4696).